The sequence spans 148 residues: Large ribosomal subunit protein bL9 (148 aa).

It belongs to the bacterial ribosomal protein bL9 family.

Functionally, binds to the 23S rRNA. The sequence is that of Large ribosomal subunit protein bL9 from Staphylococcus haemolyticus (strain JCSC1435).